The primary structure comprises 119 residues: Protein TusC (119 aa).

It belongs to the DsrF/TusC family. As to quaternary structure, heterohexamer, formed by a dimer of trimers. The hexameric TusBCD complex contains 2 copies each of TusB, TusC and TusD. The TusBCD complex interacts with TusE.

The protein localises to the cytoplasm. In terms of biological role, part of a sulfur-relay system required for 2-thiolation of 5-methylaminomethyl-2-thiouridine (mnm(5)s(2)U) at tRNA wobble positions. This chain is Protein TusC, found in Buchnera aphidicola subsp. Schizaphis graminum (strain Sg).